A 660-amino-acid polypeptide reads, in one-letter code: Bifunctional polymyxin resistance protein ArnA (660 aa).

The interval 1 to 304 (MKTVVFAYHD…TLGLVQGSRL (304 aa)) is formyltransferase ArnAFT. Residue 86 to 88 (HLI) coordinates (6R)-10-formyltetrahydrofolate. Histidine 104 functions as the Proton donor; for formyltransferase activity in the catalytic mechanism. Residues arginine 114 and 136–140 (VKRAD) contribute to the (6R)-10-formyltetrahydrofolate site. The dehydrogenase ArnADH stretch occupies residues 314-660 (RRTRVLILGV…RTVDLTDKPS (347 aa)). NAD(+)-binding positions include aspartate 347 and 368 to 369 (DI). Residues alanine 393, tyrosine 398, and 432–433 (TS) each bind UDP-alpha-D-glucuronate. Glutamate 434 (proton acceptor; for decarboxylase activity) is an active-site residue. UDP-alpha-D-glucuronate is bound by residues arginine 460, asparagine 492, 526-535 (KLIDGGKQKR), and tyrosine 613. Residue arginine 619 is the Proton donor; for decarboxylase activity of the active site.

It in the N-terminal section; belongs to the Fmt family. UDP-L-Ara4N formyltransferase subfamily. This sequence in the C-terminal section; belongs to the NAD(P)-dependent epimerase/dehydratase family. UDP-glucuronic acid decarboxylase subfamily. In terms of assembly, homohexamer, formed by a dimer of trimers.

It catalyses the reaction UDP-alpha-D-glucuronate + NAD(+) = UDP-beta-L-threo-pentopyranos-4-ulose + CO2 + NADH. It carries out the reaction UDP-4-amino-4-deoxy-beta-L-arabinose + (6R)-10-formyltetrahydrofolate = UDP-4-deoxy-4-formamido-beta-L-arabinose + (6S)-5,6,7,8-tetrahydrofolate + H(+). The protein operates within nucleotide-sugar biosynthesis; UDP-4-deoxy-4-formamido-beta-L-arabinose biosynthesis; UDP-4-deoxy-4-formamido-beta-L-arabinose from UDP-alpha-D-glucuronate: step 1/3. It functions in the pathway nucleotide-sugar biosynthesis; UDP-4-deoxy-4-formamido-beta-L-arabinose biosynthesis; UDP-4-deoxy-4-formamido-beta-L-arabinose from UDP-alpha-D-glucuronate: step 3/3. Its pathway is bacterial outer membrane biogenesis; lipopolysaccharide biosynthesis. Bifunctional enzyme that catalyzes the oxidative decarboxylation of UDP-glucuronic acid (UDP-GlcUA) to UDP-4-keto-arabinose (UDP-Ara4O) and the addition of a formyl group to UDP-4-amino-4-deoxy-L-arabinose (UDP-L-Ara4N) to form UDP-L-4-formamido-arabinose (UDP-L-Ara4FN). The modified arabinose is attached to lipid A and is required for resistance to polymyxin and cationic antimicrobial peptides. In Escherichia coli (strain K12 / MC4100 / BW2952), this protein is Bifunctional polymyxin resistance protein ArnA.